A 426-amino-acid polypeptide reads, in one-letter code: Glutamate-1-semialdehyde 2,1-aminomutase (426 aa).

Lys265 bears the N6-(pyridoxal phosphate)lysine mark.

Belongs to the class-III pyridoxal-phosphate-dependent aminotransferase family. HemL subfamily. In terms of assembly, homodimer. Pyridoxal 5'-phosphate serves as cofactor.

Its subcellular location is the cytoplasm. It carries out the reaction (S)-4-amino-5-oxopentanoate = 5-aminolevulinate. It participates in porphyrin-containing compound metabolism; protoporphyrin-IX biosynthesis; 5-aminolevulinate from L-glutamyl-tRNA(Glu): step 2/2. This Paraburkholderia phymatum (strain DSM 17167 / CIP 108236 / LMG 21445 / STM815) (Burkholderia phymatum) protein is Glutamate-1-semialdehyde 2,1-aminomutase.